Consider the following 503-residue polypeptide: Anthranilate synthase component 1 3 (503 aa).

Position 269–271 (proline 269–serine 271) interacts with L-tryptophan. Glycine 304–threonine 305 lines the chorismate pocket. Glutamate 331 contributes to the Mg(2+) binding site. Chorismate-binding positions include tyrosine 419, arginine 439, glycine 453–glycine 455, and glycine 455. Glutamate 468 lines the Mg(2+) pocket.

Belongs to the anthranilate synthase component I family. In terms of assembly, tetramer of two components I and two components II. The cofactor is Mg(2+).

The enzyme catalyses chorismate + L-glutamine = anthranilate + pyruvate + L-glutamate + H(+). The protein operates within amino-acid biosynthesis; L-tryptophan biosynthesis; L-tryptophan from chorismate: step 1/5. The sequence is that of Anthranilate synthase component 1 3 (trpE3) from Haloarcula marismortui (strain ATCC 43049 / DSM 3752 / JCM 8966 / VKM B-1809) (Halobacterium marismortui).